The sequence spans 625 residues: Sorting nexin-41 (625 aa).

The interval 1–90 (MDYNIFEAVH…STSSHAVVEA (90 aa)) is disordered. Residues 54–86 (SPPSSSSLPSSPAHSSSAGSSRASTSSSTSSHA) show a composition bias toward low complexity. Residues 98 to 235 (VSLSMSTTAT…QKFLNPEFNW (138 aa)) enclose the PX domain. A 1,2-diacyl-sn-glycero-3-phospho-(1D-myo-inositol-3-phosphate) contacts are provided by Arg153, Ser155, Lys179, and Arg202. Coiled coils occupy residues 437–469 (QFKI…NESL) and 539–563 (QLTE…KDCL).

Belongs to the sorting nexin family. In terms of assembly, binds to SNX4.

The protein localises to the prevacuolar compartment. The protein resides in the endosome. Its subcellular location is the endosome membrane. Functionally, involved in proper sorting of the v-SNARE protein SNC1. The polypeptide is Sorting nexin-41 (SNX41) (Saccharomyces cerevisiae (strain ATCC 204508 / S288c) (Baker's yeast)).